The primary structure comprises 512 residues: Protein SHC1 (512 aa).

Acidic residues predominate over residues 101 to 113 (EQDEFENDVEDDA). Disordered regions lie at residues 101–122 (EQDE…EKSQ) and 144–164 (DGNS…ESVA). Sel1-like repeat units follow at residues 318–353 (PDAQ…KRMH), 354–389 (IESV…TKNH), 390–429 (PAAM…SMAS), and 433–470 (CGAP…ALGH).

It belongs to the SKT5 family.

The protein localises to the cytoplasm. It is found in the cytoplasmic granule membrane. In terms of biological role, required for the activation of chitin synthase III (CHS3) activity during the sporulation process. In Saccharomyces cerevisiae (strain ATCC 204508 / S288c) (Baker's yeast), this protein is Protein SHC1 (SHC1).